We begin with the raw amino-acid sequence, 754 residues long: Phosphoribosylformylglycinamidine synthase subunit PurL (754 aa).

His52 is an active-site residue. ATP is bound by residues Tyr55 and Lys95. Mg(2+) is bound at residue Glu97. Residues 98 to 101 (SHNH) and Arg120 each bind substrate. Residue His99 is the Proton acceptor of the active site. Asp121 contributes to the Mg(2+) binding site. Gln244 provides a ligand contact to substrate. Asp272 is a Mg(2+) binding site. 316 to 318 (ESQ) is a substrate binding site. ATP contacts are provided by Asn504 and Gly541. Asn542 contributes to the Mg(2+) binding site. Ser544 contributes to the substrate binding site.

Belongs to the FGAMS family. In terms of assembly, monomer. Part of the FGAM synthase complex composed of 1 PurL, 1 PurQ and 2 PurS subunits.

The protein localises to the cytoplasm. The enzyme catalyses N(2)-formyl-N(1)-(5-phospho-beta-D-ribosyl)glycinamide + L-glutamine + ATP + H2O = 2-formamido-N(1)-(5-O-phospho-beta-D-ribosyl)acetamidine + L-glutamate + ADP + phosphate + H(+). Its pathway is purine metabolism; IMP biosynthesis via de novo pathway; 5-amino-1-(5-phospho-D-ribosyl)imidazole from N(2)-formyl-N(1)-(5-phospho-D-ribosyl)glycinamide: step 1/2. Part of the phosphoribosylformylglycinamidine synthase complex involved in the purines biosynthetic pathway. Catalyzes the ATP-dependent conversion of formylglycinamide ribonucleotide (FGAR) and glutamine to yield formylglycinamidine ribonucleotide (FGAM) and glutamate. The FGAM synthase complex is composed of three subunits. PurQ produces an ammonia molecule by converting glutamine to glutamate. PurL transfers the ammonia molecule to FGAR to form FGAM in an ATP-dependent manner. PurS interacts with PurQ and PurL and is thought to assist in the transfer of the ammonia molecule from PurQ to PurL. This is Phosphoribosylformylglycinamidine synthase subunit PurL from Salinibacter ruber (strain DSM 13855 / M31).